A 637-amino-acid polypeptide reads, in one-letter code: MKKLQEAHLRKPVTPDLLMTPSDQGDVDLDVDFAADRGNWTGKLDFLLSCIGYCVGLGNVWRFPYRAYTNGGGAFLVPYFLMLAICGIPLFFLELSLGQFSSLGPLAVWKISPLFKGAGAAMLLIVGLVAIYYNMIIAYVLFYLFASLTSNLPWEHCGNWWNTERCLEHRGPKDGNGALPLNLSSTVSPSEEYWSRYVLHIQGSQGIGRPGEIRWNLCLCLLLAWVIVFLCILKGVKSSGKVVYFTATFPYLILLMLLVRGVTLPGAWKGIQFYLTPQFHHLLSSKVWIEAALQIFYSLGVGFGGLLTFASYNTFHQNIYRDTFIVTLGNAITSILAGFAIFSVLGYMSQELGVPVDQVAKAGPGLAFVIYPQAMTMLPLSPFWSFLFFFMLLTLGLDSQFAFLETIVTAVTDEFPYYLRPKKAVFSGLICVAMYLMGLILTTDGGMYWLVLLDDYSASFGLMVVVITTCLAVTRVYGIQRFCRDIHMMLGFKPGLYFRACWLFLSPATLLALLVYSIVKYQPSEYGSYRFPAWAELLGILMGLLSCLMIPAGMLVAVLREEGSLWERLQQASRPAIDWGPSLEENRTGMYVATLAGSQSPKPLMVHMRKYGGITSFENTAIEVDREIAEEEEESMM.

At 1–45 (MKKLQEAHLRKPVTPDLLMTPSDQGDVDLDVDFAADRGNWTGKLD) the chain is on the cytoplasmic side. A Phosphothreonine modification is found at T20. Phosphoserine is present on S22. 3 helical membrane passes run 46–66 (FLLS…FPYR), 74–93 (AFLV…LFFL), and 117–137 (GAGA…NMII). Residues 138 to 214 (AYVLFYLFAS…QGIGRPGEIR (77 aa)) are Extracellular-facing. N-linked (GlcNAc...) asparagine glycosylation occurs at N182. Helical transmembrane passes span 215-233 (WNLC…LCIL), 242-259 (VVYF…MLLV), 295-312 (IFYS…FASY), 324-345 (FIVT…FSVL), 378-397 (LPLS…TLGL), 425-443 (VFSG…ILTT), 459-479 (SFGL…VYGI), 500-519 (ACWL…YSIV), and 538-556 (LGIL…GMLV). The Cytoplasmic segment spans residues 557–637 (AVLREEGSLW…IAEEEEESMM (81 aa)). Phosphoserine occurs at positions 573 and 582. Position 588 is a phosphothreonine (T588). At Y591 the chain carries Phosphotyrosine. Phosphoserine occurs at positions 598 and 600.

It belongs to the sodium:neurotransmitter symporter (SNF) (TC 2.A.22) family. SLC6A7 subfamily. In terms of tissue distribution, expressed in subpopulations of putative glutamatergic pathways of rat brain.

It is found in the synaptic cell membrane. It catalyses the reaction L-proline(out) + chloride(out) + 2 Na(+)(out) = L-proline(in) + chloride(in) + 2 Na(+)(in). The enzyme catalyses L-pipecolate(out) + chloride(out) + 2 Na(+)(out) = L-pipecolate(in) + chloride(in) + 2 Na(+)(in). Its function is as follows. Brain specific sodium (and chloride)-dependent proline transporter. Terminates the action of proline by its high affinity sodium-dependent reuptake into presynaptic terminals. The sequence is that of Sodium-dependent proline transporter (Slc6a7) from Rattus norvegicus (Rat).